The chain runs to 243 residues: Probable fructoselysine utilization operon transcriptional repressor (243 aa).

The 69-residue stretch at 10 to 78 (QLLYATVRQR…QGKGTFVQSQ (69 aa)) folds into the HTH gntR-type domain. Residues 38–57 (ENELCTQYNVSRITIRKAIS) constitute a DNA-binding region (H-T-H motif).

The protein operates within carbohydrate metabolism; fructoselysine degradation [regulation]. Functionally, may regulate the transcription of the frlABCDR operon, involved in the utilization of fructoselysine and psicoselysine. The chain is Probable fructoselysine utilization operon transcriptional repressor (frlR) from Shigella flexneri.